We begin with the raw amino-acid sequence, 336 residues long: Acetyl-coenzyme A carboxylase carboxyl transferase subunit alpha (336 aa).

A CoA carboxyltransferase C-terminal domain is found at 48–308 (ALEAKVESLR…KSMLIEELQG (261 aa)).

It belongs to the AccA family. Acetyl-CoA carboxylase is a heterohexamer composed of biotin carboxyl carrier protein (AccB), biotin carboxylase (AccC) and two subunits each of ACCase subunit alpha (AccA) and ACCase subunit beta (AccD).

The protein resides in the cytoplasm. It catalyses the reaction N(6)-carboxybiotinyl-L-lysyl-[protein] + acetyl-CoA = N(6)-biotinyl-L-lysyl-[protein] + malonyl-CoA. It functions in the pathway lipid metabolism; malonyl-CoA biosynthesis; malonyl-CoA from acetyl-CoA: step 1/1. In terms of biological role, component of the acetyl coenzyme A carboxylase (ACC) complex. First, biotin carboxylase catalyzes the carboxylation of biotin on its carrier protein (BCCP) and then the CO(2) group is transferred by the carboxyltransferase to acetyl-CoA to form malonyl-CoA. This Chlorobaculum parvum (strain DSM 263 / NCIMB 8327) (Chlorobium vibrioforme subsp. thiosulfatophilum) protein is Acetyl-coenzyme A carboxylase carboxyl transferase subunit alpha.